Consider the following 132-residue polypeptide: Small ribosomal subunit protein uS17c (132 aa).

Over residues 1-11 the composition is skewed to low complexity; it reads MLLLSSPFVSV. Disordered regions lie at residues 1–23 and 104–132; these read MLLL…SHGA and PLPP…SSRE. The N-terminal 31 residues, 1 to 31, are a transit peptide targeting the chloroplast; that stretch reads MLLLSSPFVSVSPPPPPLSSHGARPALRIEA. The span at 122-132 shows a compositional bias: acidic residues; sequence SDDDQEPSSRE.

The protein belongs to the universal ribosomal protein uS17 family. In terms of assembly, part of the 30S ribosomal subunit.

The protein resides in the plastid. Its subcellular location is the chloroplast. In terms of biological role, one of the primary rRNA binding proteins, it binds specifically to the 5'-end of 16S ribosomal RNA. Functionally, in the hcf60 mutation the Activator tag is inserted 17 base pars upstream of the initiation codon. This mutation is seedling lethal, due to plastid ribosome insufficiency. However under non-light stressed conditions photosynthesis and oxygen evolution can occur. This chain is Small ribosomal subunit protein uS17c (RPS17), found in Zea mays (Maize).